The following is a 456-amino-acid chain: MSIGFLRQALNALQQQSRSRTSHRVNQWFKWLSPGLSIKRWLLISVGGVLLAILGLAIWVKLTPIFWLLELVRGFLGAVANILPNYISGPLVILGGLLLLLWGQTRTVGSITQVLRPGAEEELIDVLLAHRRLYRGPKIVVIGGGTGLSTLLRGLKTYSANITAIVTVADDGGSSGRLRQEFGVLPPGDIRNCLAALADEEKLLTELFQYRFRAGDGLTGHSFGNLFLTAMSDITGDLERAVAASSKVLAVRGQVLPATLSDVRLWAELADGRRIEGESSIPKAGGKIVKIGCIPANPPALPAAIKAIKEADYIIIGPGSLYTSLIPNLLVSDIADAIAQSQAPRIYVCNVMTQPGETQGYTVADHIRAIDAACGERQLFDAVLVHKKSPSAQSLIRYAQQDSHPVFLDREAVSQLGRRIVLANVLYEDKTGFVRHNPQKLAKVLLKWYGGAHHGK.

This sequence belongs to the gluconeogenesis factor family.

The protein resides in the cytoplasm. Its function is as follows. Required for morphogenesis under gluconeogenic growth conditions. The polypeptide is Putative gluconeogenesis factor (Nostoc sp. (strain PCC 7120 / SAG 25.82 / UTEX 2576)).